We begin with the raw amino-acid sequence, 263 residues long: MSQQNGNADRVGAQGGMEHSFGFKAVDESEKQGLVNDVFHKVASKYDVMNDLMSAGMHRVWKDAMIAWLAPSKRPGWTSLDVAGGTGDIAFRIVEASGRQAHVTILDINGSMLGVGRERAIKKGLADNLEFVEASAEELPFEDASFDAYTISFGIRNVPHIDKALSEAYRVLKPGGRFLCLEFSEVELPVLDKVYDQWSFHAIPRIGKMITGDADSYSYLVESIRKFPKQQDFAAMIEKAGFERVSYRNFTGGIAALHSGWKL.

S-adenosyl-L-methionine contacts are provided by Thr-86, Asp-107, and Ser-152.

This sequence belongs to the class I-like SAM-binding methyltransferase superfamily. MenG/UbiE family.

The catalysed reaction is a 2-demethylmenaquinol + S-adenosyl-L-methionine = a menaquinol + S-adenosyl-L-homocysteine + H(+). It catalyses the reaction a 2-methoxy-6-(all-trans-polyprenyl)benzene-1,4-diol + S-adenosyl-L-methionine = a 5-methoxy-2-methyl-3-(all-trans-polyprenyl)benzene-1,4-diol + S-adenosyl-L-homocysteine + H(+). It participates in quinol/quinone metabolism; menaquinone biosynthesis; menaquinol from 1,4-dihydroxy-2-naphthoate: step 2/2. The protein operates within cofactor biosynthesis; ubiquinone biosynthesis. In terms of biological role, methyltransferase required for the conversion of demethylmenaquinol (DMKH2) to menaquinol (MKH2) and the conversion of 2-polyprenyl-6-methoxy-1,4-benzoquinol (DDMQH2) to 2-polyprenyl-3-methyl-6-methoxy-1,4-benzoquinol (DMQH2). The polypeptide is Ubiquinone/menaquinone biosynthesis C-methyltransferase UbiE (Brucella anthropi (strain ATCC 49188 / DSM 6882 / CCUG 24695 / JCM 21032 / LMG 3331 / NBRC 15819 / NCTC 12168 / Alc 37) (Ochrobactrum anthropi)).